The chain runs to 323 residues: tRNA dimethylallyltransferase (323 aa).

ATP is bound at residue 12 to 19 (GPTAAGKT). Residue 14–19 (TAAGKT) participates in substrate binding. 2 interaction with substrate tRNA regions span residues 37-40 (DSAL) and 161-165 (QRLIR).

It belongs to the IPP transferase family. As to quaternary structure, monomer. It depends on Mg(2+) as a cofactor.

It catalyses the reaction adenosine(37) in tRNA + dimethylallyl diphosphate = N(6)-dimethylallyladenosine(37) in tRNA + diphosphate. Functionally, catalyzes the transfer of a dimethylallyl group onto the adenine at position 37 in tRNAs that read codons beginning with uridine, leading to the formation of N6-(dimethylallyl)adenosine (i(6)A). The sequence is that of tRNA dimethylallyltransferase from Pseudomonas putida (strain ATCC 700007 / DSM 6899 / JCM 31910 / BCRC 17059 / LMG 24140 / F1).